The primary structure comprises 77 residues: Large ribosomal subunit protein eL20 (77 aa).

This sequence belongs to the eukaryotic ribosomal protein eL20 family. In terms of assembly, part of the 50S ribosomal subunit. Binds 23S rRNA.

This chain is Large ribosomal subunit protein eL20, found in Thermococcus onnurineus (strain NA1).